A 259-amino-acid chain; its full sequence is Global transcriptional regulator CodY (259 aa).

The GAF domain stretch occupies residues 1–155 (MNLLEKTRKI…GATVVGMEIL (155 aa)). A DNA-binding region (H-T-H motif) is located at residues 203–222 (ASKIADRVGITRSVIVNALR). Position 215 is a phosphoserine (Ser215).

This sequence belongs to the CodY family.

The protein resides in the cytoplasm. In terms of biological role, DNA-binding global transcriptional regulator which is involved in the adaptive response to starvation and acts by directly or indirectly controlling the expression of numerous genes in response to nutrient availability. During rapid exponential growth, CodY is highly active and represses genes whose products allow adaptation to nutrient depletion. The chain is Global transcriptional regulator CodY from Lysinibacillus sphaericus (strain C3-41).